Here is a 256-residue protein sequence, read N- to C-terminus: Hydroxyacylglutathione hydrolase (256 aa).

7 residues coordinate Zn(2+): His-57, His-59, Asp-61, His-62, His-115, Asp-134, and His-172.

The protein belongs to the metallo-beta-lactamase superfamily. Glyoxalase II family. Monomer. Zn(2+) serves as cofactor.

The enzyme catalyses an S-(2-hydroxyacyl)glutathione + H2O = a 2-hydroxy carboxylate + glutathione + H(+). It participates in secondary metabolite metabolism; methylglyoxal degradation; (R)-lactate from methylglyoxal: step 2/2. In terms of biological role, thiolesterase that catalyzes the hydrolysis of S-D-lactoyl-glutathione to form glutathione and D-lactic acid. This chain is Hydroxyacylglutathione hydrolase, found in Jannaschia sp. (strain CCS1).